Reading from the N-terminus, the 237-residue chain is Uridylate kinase (237 aa).

10 to 13 (KLSG) is an ATP binding site. Gly-51 lines the UMP pocket. Gly-52 and Arg-56 together coordinate ATP. UMP is bound by residues Asp-71 and 132–139 (MGMPFFST). Positions 160, 166, and 169 each coordinate ATP.

This sequence belongs to the UMP kinase family. Homohexamer.

Its subcellular location is the cytoplasm. The enzyme catalyses UMP + ATP = UDP + ADP. It participates in pyrimidine metabolism; CTP biosynthesis via de novo pathway; UDP from UMP (UMPK route): step 1/1. With respect to regulation, inhibited by UTP. Its function is as follows. Catalyzes the reversible phosphorylation of UMP to UDP. The protein is Uridylate kinase of Nocardioides sp. (strain ATCC BAA-499 / JS614).